The sequence spans 1392 residues: Protein dispatched homolog 3 (1392 aa).

At 1–73 the chain is on the cytoplasmic side; it reads MDTEDDPLLQ…LGWAFTNPCC (73 aa). The segment at 16-40 is disordered; it reads EEQEEEEATGETFLGAQKPGPQPGA. The helical transmembrane segment at 74–94 threads the bilayer; the sequence is AGLVLFLGCSIPMALSAFMFL. Over 95–462 the chain is Lumenal; that stretch reads YYPPLDIDIS…YEVRRTFNND (368 aa). Residues 162 to 248 form a disordered region; that stretch reads GNRSRQASRA…HAAVAANQSR (87 aa). Residue N163 is glycosylated (N-linked (GlcNAc...) asparagine). The segment covering 190-199 has biased composition (polar residues); it reads SAAQKPTANR. Positions 457 to 615 constitute an SSD domain; it reads RTFNNDMLLA…LVTMPAALGL (159 aa). A helical membrane pass occupies residues 463 to 483; sequence MLLAFISSSCIAALVYILTSC. Position 484 (S484) is a topological domain, cytoplasmic. Residues 485 to 505 form a helical membrane-spanning segment; that stretch reads VFLSFFGIASIGLSCLVALFL. At 506-508 the chain is on the lumenal side; that stretch reads YHV. The helical transmembrane segment at 509–529 threads the bilayer; it reads VFGIQYLGILNGVAAFVIVGI. At 530–573 the chain is on the cytoplasmic side; it reads GVDDVFVFINTYRQATHLEDPQLRMIHTVQTAGKATFFTSLTTA. The chain crosses the membrane as a helical span at residues 574 to 594; that stretch reads AAYAANVFSQIPAVHDFGLFM. Residue S595 is a topological domain, lumenal. The chain crosses the membrane as a helical span at residues 596–616; that stretch reads LIVSCCWLAVLVTMPAALGLW. Residues 617–729 lie on the Cytoplasmic side of the membrane; the sequence is SLYLAPLESS…WVLWSAVKSR (113 aa). Residues 730 to 750 traverse the membrane as a helical segment; that stretch reads WVIVGLFVSILILSLVFASRL. The Lumenal segment spans residues 751 to 1182; the sequence is RPASRAPLLF…IFMEIVGVQS (432 aa). N1021 carries N-linked (GlcNAc...) asparagine glycosylation. Residues 1183–1203 traverse the membrane as a helical segment; that stretch reads ALCGLVLSLLICVAAVAVFTT. Residue H1204 is a topological domain, cytoplasmic. Residues 1205 to 1225 form a helical membrane-spanning segment; that stretch reads ILLLLPVLLSILGIVCLVVTI. At 1226–1291 the chain is on the lumenal side; sequence MYWSGWEMGA…TLEAVRHVGV (66 aa). A helical membrane pass occupies residues 1292–1312; sequence AIVSSALTTVIATVPLFFCII. Residues 1313–1320 are Cytoplasmic-facing; it reads APFAKFGK. The chain crosses the membrane as a helical span at residues 1321-1341; sequence IVALNTGVSILYTLTVSTALL. Residues 1342 to 1358 are Lumenal-facing; the sequence is GIMAPSSFTRTRTSFLK. Residues 1359-1379 form a helical membrane-spanning segment; that stretch reads ALGAVLLAGALGLGACLVLLQ. At 1380 to 1392 the chain is on the cytoplasmic side; the sequence is SGYKIPLPAGASL.

It belongs to the patched family. In terms of tissue distribution, expressed in brain and testis.

It is found in the endoplasmic reticulum membrane. It localises to the nucleus membrane. The protein resides in the cytoplasmic vesicle membrane. Its function is as follows. Plays a role in neuronal proliferation and differentiation. Plays a role in the accumulation of cellular cholesterol. Involved in intracellular lipid droplet formation. May contribute to cholesterol homeostasis in neuronal cells. This Homo sapiens (Human) protein is Protein dispatched homolog 3.